The primary structure comprises 347 residues: NADH-quinone oxidoreductase subunit H 1 (347 aa).

9 helical membrane-spanning segments follow: residues 13–33 (IIMIGQSLLLLVCLLVFIAYV), 50–70 (PNVVGPFGLFQSFADLLKFVF), 82–102 (AVFLLAPLVTVLLALSTWAVV), 115–135 (VGILYIFAISSLEVYGIIMGG), 161–181 (IGFVIVTVLLCVGSLNLTDIV), 198–218 (FLDWHWLSLFPMFIVFFISAL), 263–283 (CALTTILFLGGWLPPVDIWIL), 286–306 (VPGIIWFTLKACLVFFMFAMV), and 321–341 (LGWKVFLPLSLAMVIIVAFVL).

It belongs to the complex I subunit 1 family. NDH-1 is composed of 14 different subunits. Subunits NuoA, H, J, K, L, M, N constitute the membrane sector of the complex.

It is found in the cell inner membrane. It carries out the reaction a quinone + NADH + 5 H(+)(in) = a quinol + NAD(+) + 4 H(+)(out). Functionally, NDH-1 shuttles electrons from NADH, via FMN and iron-sulfur (Fe-S) centers, to quinones in the respiratory chain. The immediate electron acceptor for the enzyme in this species is believed to be ubiquinone. Couples the redox reaction to proton translocation (for every two electrons transferred, four hydrogen ions are translocated across the cytoplasmic membrane), and thus conserves the redox energy in a proton gradient. This subunit may bind ubiquinone. The polypeptide is NADH-quinone oxidoreductase subunit H 1 (Rhizobium etli (strain ATCC 51251 / DSM 11541 / JCM 21823 / NBRC 15573 / CFN 42)).